Reading from the N-terminus, the 340-residue chain is Short-chain dehydrogenase/reductase prx1 (340 aa).

Residues I60, K84, D104, N131, and K162 each coordinate NADP(+). Catalysis depends on S184, which acts as the Proton donor. Residues Y210 and K214 each coordinate NADP(+). Y210 functions as the Proton acceptor in the catalytic mechanism. The active-site Lowers pKa of active site Tyr is the K214.

Belongs to the short-chain dehydrogenases/reductases (SDR) family.

It functions in the pathway sesquiterpene biosynthesis. Functionally, short-chain dehydrogenase/reductase; part of the gene cluster that mediates the biosynthesis of PR-toxin, a bicyclic sesquiterpene belonging to the eremophilane class and acting as a mycotoxin. The first step of the pathway is catalyzed by the aristolochene synthase which performs the cyclization of trans,trans-farnesyl diphosphate (FPP) to the bicyclic sesquiterpene aristolochene. Following the formation of aristolochene, the non-oxygenated aristolochene is converted to the trioxygenated intermediate eremofortin B, via 7-epi-neopetasone. This conversion appears to involve three enzymes, a hydroxysterol oxidase-like enzyme, the quinone-oxidase prx3 that forms the quinone-type-structure in the bicyclic nucleus of aristolochene with the C8-oxo group and the C-3 hydroxyl group, and the P450 monooxygenase prx9 that introduces the epoxide at the double bond between carbons 1 and 2. No monoxy or dioxy-intermediates have been reported to be released to the broth, so these three early oxidative reactions may be coupled together. Eremofortin B is further oxidized by another P450 monooxygenase, that introduces a second epoxide between carbons 7 and 11 prior to acetylation to eremofortin A by the acetyltransferase prx11. The second epoxidation may be performed by a second P450 monooxygenase. After the acetylation step, eremofortin A is converted to eremofortin C and then to PR-toxin. First the conversion of eremofortin A to eremofortin C proceeds by oxidation of the side chain of the molecule at C-12 and is catalyzed by the short-chain oxidoreductase prx1. The cytochrome P450 monooxygenase prx8 also plays a role in this step. The primary alcohol formed at C-12 is finally oxidized by the short-chain alcohol dehydrogenase prx4 that forms PR-toxin. This Penicillium rubens (strain ATCC 28089 / DSM 1075 / NRRL 1951 / Wisconsin 54-1255) (Penicillium chrysogenum) protein is Short-chain dehydrogenase/reductase prx1.